A 216-amino-acid chain; its full sequence is Flavin-dependent thymidylate synthase (216 aa).

In terms of domain architecture, ThyX spans 9–206 (GFVELVDVMG…PWTYEAFIKY (198 aa)). FAD contacts are provided by residues S55, 78–80 (RHR), and E86. DUMP contacts are provided by residues 75–78 (QWFR), 86–90 (ELSGR), and R145. Positions 78–88 (RHRIASYNELS) match the ThyX motif motif. FAD-binding positions include 161–163 (NAR) and N167. Residue R172 coordinates dUMP. R172 acts as the Involved in ionization of N3 of dUMP, leading to its activation in catalysis.

The protein belongs to the thymidylate synthase ThyX family. In terms of assembly, homotetramer. It depends on FAD as a cofactor.

The catalysed reaction is dUMP + (6R)-5,10-methylene-5,6,7,8-tetrahydrofolate + NADPH + H(+) = dTMP + (6S)-5,6,7,8-tetrahydrofolate + NADP(+). The protein operates within pyrimidine metabolism; dTTP biosynthesis. Catalyzes the reductive methylation of 2'-deoxyuridine-5'-monophosphate (dUMP) to 2'-deoxythymidine-5'-monophosphate (dTMP) while utilizing 5,10-methylenetetrahydrofolate (mTHF) as the methyl donor, and NADPH and FADH(2) as the reductant. The sequence is that of Flavin-dependent thymidylate synthase from Thermotoga neapolitana (strain ATCC 49049 / DSM 4359 / NBRC 107923 / NS-E).